The chain runs to 162 residues: ATP synthase subunit b (162 aa).

A helical transmembrane segment spans residues 10–29 (LIWTIINFAVLLWGMHRFLY).

It belongs to the ATPase B chain family. F-type ATPases have 2 components, F(1) - the catalytic core - and F(0) - the membrane proton channel. F(1) has five subunits: alpha(3), beta(3), gamma(1), delta(1), epsilon(1). F(0) has three main subunits: a(1), b(2) and c(10-14). The alpha and beta chains form an alternating ring which encloses part of the gamma chain. F(1) is attached to F(0) by a central stalk formed by the gamma and epsilon chains, while a peripheral stalk is formed by the delta and b chains.

It localises to the cell membrane. Functionally, f(1)F(0) ATP synthase produces ATP from ADP in the presence of a proton or sodium gradient. F-type ATPases consist of two structural domains, F(1) containing the extramembraneous catalytic core and F(0) containing the membrane proton channel, linked together by a central stalk and a peripheral stalk. During catalysis, ATP synthesis in the catalytic domain of F(1) is coupled via a rotary mechanism of the central stalk subunits to proton translocation. Its function is as follows. Component of the F(0) channel, it forms part of the peripheral stalk, linking F(1) to F(0). In Symbiobacterium thermophilum (strain DSM 24528 / JCM 14929 / IAM 14863 / T), this protein is ATP synthase subunit b.